The sequence spans 325 residues: Beta-ketoacyl-[acyl-carrier-protein] synthase III (325 aa).

Catalysis depends on residues Cys-119 and His-252. Residues 253 to 257 form an ACP-binding region; that stretch reads QANIR. Asn-282 is a catalytic residue.

This sequence belongs to the thiolase-like superfamily. FabH family. In terms of assembly, homodimer.

The protein resides in the cytoplasm. The enzyme catalyses malonyl-[ACP] + acetyl-CoA + H(+) = 3-oxobutanoyl-[ACP] + CO2 + CoA. It participates in lipid metabolism; fatty acid biosynthesis. Its function is as follows. Catalyzes the condensation reaction of fatty acid synthesis by the addition to an acyl acceptor of two carbons from malonyl-ACP. Catalyzes the first condensation reaction which initiates fatty acid synthesis and may therefore play a role in governing the total rate of fatty acid production. Possesses both acetoacetyl-ACP synthase and acetyl transacylase activities. Its substrate specificity determines the biosynthesis of branched-chain and/or straight-chain of fatty acids. The protein is Beta-ketoacyl-[acyl-carrier-protein] synthase III of Verminephrobacter eiseniae (strain EF01-2).